Reading from the N-terminus, the 195-residue chain is PRELI domain containing protein 3B (195 aa).

In terms of domain architecture, PRELI/MSF1 spans 1-172 (MKIWTSEHVF…VIHKLNAEIE (172 aa)). Phosphoserine occurs at positions 46 and 51.

The protein belongs to the slowmo family.

This chain is PRELI domain containing protein 3B (PRELID3B), found in Cricetulus griseus (Chinese hamster).